The sequence spans 277 residues: MATANSSVKIGNVTFSNSAPFALIAGPCQMETREHAFDMAGRLKEMTDKLGIDLVYKSSFDKANRTSLKAERGIGLEKAMEVFADLKKEFGFPVLTDIHTEEQCAAVAPVVDVLQIPAFLCRQTDLLIAAAKTGRVVNVKKGQFLAPWDMKNVLSKITESGNPNVLATERGVSFGYNTLVSDMRSLPIMAGLGSPVVFDATHSVQQPGGHGGSSGGQREFVETLARAAVAVGVAGLFIETHQDPDNAPSDGPNMVPVDKMPALLEKLMAFDRIAKGL.

The protein belongs to the KdsA family.

It localises to the cytoplasm. The catalysed reaction is D-arabinose 5-phosphate + phosphoenolpyruvate + H2O = 3-deoxy-alpha-D-manno-2-octulosonate-8-phosphate + phosphate. It participates in carbohydrate biosynthesis; 3-deoxy-D-manno-octulosonate biosynthesis; 3-deoxy-D-manno-octulosonate from D-ribulose 5-phosphate: step 2/3. Its pathway is bacterial outer membrane biogenesis; lipopolysaccharide biosynthesis. This Brucella anthropi (strain ATCC 49188 / DSM 6882 / CCUG 24695 / JCM 21032 / LMG 3331 / NBRC 15819 / NCTC 12168 / Alc 37) (Ochrobactrum anthropi) protein is 2-dehydro-3-deoxyphosphooctonate aldolase.